Here is a 794-residue protein sequence, read N- to C-terminus: Histone-lysine N-methyltransferase, H3 lysine-9 specific SUVH5 (794 aa).

2 disordered regions span residues 187–210 and 254–276; these read VGRD…KRSI and SPVK…KNSE. Residues 194 to 203 are compositionally biased toward polar residues; the sequence is NMGSKFSKNG. The span at 258 to 276 shows a compositional bias: basic and acidic residues; the sequence is PSEKRNGDYGEGSMRKNSE. Positions 365–515 constitute a YDG domain; that stretch reads GTVPGVEVGD…KLVFKFKLRR (151 aa). Residues 585–644 enclose the Pre-SET domain; it reads KSCGCTNGCSKSKNCACIVKNGGKIPYYDGAIVEIKPLVYECGPHCKCPPSCNMRVSQHG. The SET domain maps to 647–764; sequence IKLEIFKTES…PLQELSYDYN (118 aa). In terms of domain architecture, Post-SET spans 778 to 794; that stretch reads KKKFCYCGSAECSGRLY.

Belongs to the class V-like SAM-binding methyltransferase superfamily. Histone-lysine methyltransferase family. Suvar3-9 subfamily. Expressed in leaves stems and flowers.

It is found in the nucleus. The protein resides in the chromosome. It localises to the centromere. It catalyses the reaction N(6)-methyl-L-lysyl(9)-[histone H3] + S-adenosyl-L-methionine = N(6),N(6)-dimethyl-L-lysyl(9)-[histone H3] + S-adenosyl-L-homocysteine + H(+). The enzyme catalyses L-lysyl(9)-[histone H3] + S-adenosyl-L-methionine = N(6)-methyl-L-lysyl(9)-[histone H3] + S-adenosyl-L-homocysteine + H(+). In terms of biological role, histone methyltransferase. Methylates 'Lys-9' of histone H3. H3 'Lys-9' methylation represents a specific tag for epigenetic transcriptional repression. The chain is Histone-lysine N-methyltransferase, H3 lysine-9 specific SUVH5 (SUVH5) from Arabidopsis thaliana (Mouse-ear cress).